Reading from the N-terminus, the 160-residue chain is Tumor suppressor ARF (160 aa).

The interval 1–63 (MGRRFVVTVR…RRGPQPHPGP (63 aa)) is interaction with CDK5RAP3 and MDM2. Disordered stretches follow at residues 49 to 74 (PERI…QSGS) and 90 to 116 (HPLP…GRGA).

In terms of assembly, does not interact with cyclins, CDK1, CDK2, CDK4, CDK5 or CDK6. Binds to BCL6, E2F1, HUWE1, MDM2, MYC, NPM1/B23, TOP1/TOPOI and UBE2I/UBC9. Interacts with TBRG1 and COMMD1. Interacts with CDKN2AIP and E4F1. Interacts with CDK5RAP3 and MDM2; form a ternary complex involved in regulation of p53/TP53. Interacts with NOP53; the interaction is direct and promotes ARF nucleoplasmic relocalization and ubiquitin-mediated proteasomal degradation. Interacts with TTF1 (via the N-terminal region (NRD) and a C-terminal region); the interaction is direct and inhibits the nucleolar localization of TTF1. In terms of processing, ubiquitinated in normal cells by TRIP12 via the ubiquitin fusion degradation (UFD) pathway, a process that mediates ubiquitination at the N-terminus, regardless of the absence of lysine residues. Ubiquitination leads to its proteasomal degradation. In cancer cells, however, TRIP12 is located in a different cell compartment, preventing ubiquitination and degradation. Widely expressed with very low levels in kidney and colon.

The protein localises to the nucleus. It is found in the nucleolus. It localises to the nucleoplasm. Functionally, capable of inducing cell cycle arrest in G1 and G2 phases. Acts as a tumor suppressor. Binds to MDM2 and blocks its nucleocytoplasmic shuttling by sequestering it in the nucleolus. This inhibits the oncogenic action of MDM2 by blocking MDM2-induced degradation of p53 and enhancing p53-dependent transactivation and apoptosis. Also induces G2 arrest and apoptosis in a p53-independent manner by preventing the activation of cyclin B1/CDC2 complexes. Binds to BCL6 and down-regulates BCL6-induced transcriptional repression. Binds to E2F1 and MYC and blocks their transcriptional activator activity but has no effect on MYC transcriptional repression. Binds to TOP1/TOPOI and stimulates its activity. This complex binds to rRNA gene promoters and may play a role in rRNA transcription and/or maturation. Interacts with NPM1/B23 and promotes its polyubiquitination and degradation, thus inhibiting rRNA processing. Plays a role in inhibiting ribosome biogenesis, perhaps by binding to the nucleolar localization sequence of transcription termination factor TTF1, and thereby preventing nucleolar localization of TTF1. Interacts with COMMD1 and promotes its 'Lys63'-linked polyubiquitination. Interacts with UBE2I/UBC9 and enhances sumoylation of a number of its binding partners including MDM2 and E2F1. Binds to HUWE1 and represses its ubiquitin ligase activity. May play a role in controlling cell proliferation and apoptosis during mammary gland development. This is Tumor suppressor ARF from Rattus norvegicus (Rat).